The following is a 148-amino-acid chain: HTH-type transcriptional regulator SarZ (148 aa).

One can recognise an HTH marR-type domain in the interval 9 to 139 (SKQLCFLFYV…IINNLRNFVS (131 aa)). The segment at residues 55 to 78 (IKKLGERVFLDSGTLTPLLKKLEK) is a DNA-binding region (H-T-H motif).

It belongs to the SarZ family.

The protein resides in the cytoplasm. Functionally, activates transcription of virulence factors alpha- and beta hemolysin genes (hla and hlb). Also, activates RNAIII expression, a central regulator transcribed from the agr locus. The protein is HTH-type transcriptional regulator SarZ (sarZ) of Staphylococcus aureus (strain USA300).